Here is a 177-residue protein sequence, read N- to C-terminus: Large ribosomal subunit protein uL6 (177 aa).

Belongs to the universal ribosomal protein uL6 family. As to quaternary structure, part of the 50S ribosomal subunit.

In terms of biological role, this protein binds to the 23S rRNA, and is important in its secondary structure. It is located near the subunit interface in the base of the L7/L12 stalk, and near the tRNA binding site of the peptidyltransferase center. This chain is Large ribosomal subunit protein uL6, found in Rickettsia felis (strain ATCC VR-1525 / URRWXCal2) (Rickettsia azadi).